The following is a 538-amino-acid chain: Sterol esterase 2 (538 aa).

Residues methionine 1–arginine 11 are Cytoplasmic-facing. A helical; Signal-anchor for type II membrane protein membrane pass occupies residues leucine 12 to lysine 32. Topologically, residues asparagine 33–arginine 538 are lumenal. Residues lysine 42–glutamate 87 form a disordered region. A compositionally biased stretch (basic residues) spans lysine 60–arginine 70. A phosphoserine mark is found at serine 73 and serine 107. The Nucleophile role is filled by serine 287. Catalysis depends on charge relay system residues aspartate 480 and histidine 511.

It belongs to the AB hydrolase superfamily. In terms of processing, not glycosylated.

It is found in the cell membrane. It catalyses the reaction a sterol ester + H2O = a sterol + a fatty acid + H(+). Functionally, mediates the hydrolysis of steryl esters. Required for mobilization of steryl ester, thereby playing a central role in lipid metabolism. This Saccharomyces cerevisiae (strain ATCC 204508 / S288c) (Baker's yeast) protein is Sterol esterase 2 (YEH2).